Consider the following 22-residue polypeptide: Hemocyanin subunit 4 (22 aa).

This sequence belongs to the tyrosinase family. Hemocyanin subfamily. Hemolymph.

The protein resides in the secreted. The protein localises to the extracellular space. Hemocyanins are copper-containing oxygen carriers occurring freely dissolved in the hemolymph of many mollusks and arthropods. The chain is Hemocyanin subunit 4 from Homarus americanus (American lobster).